The sequence spans 213 residues: Uridine kinase (213 aa).

14–21 (GASASGKS) is an ATP binding site.

This sequence belongs to the uridine kinase family.

Its subcellular location is the cytoplasm. It carries out the reaction uridine + ATP = UMP + ADP + H(+). It catalyses the reaction cytidine + ATP = CMP + ADP + H(+). It participates in pyrimidine metabolism; CTP biosynthesis via salvage pathway; CTP from cytidine: step 1/3. The protein operates within pyrimidine metabolism; UMP biosynthesis via salvage pathway; UMP from uridine: step 1/1. The protein is Uridine kinase of Vibrio parahaemolyticus serotype O3:K6 (strain RIMD 2210633).